A 332-amino-acid polypeptide reads, in one-letter code: MKSSVPSLLFVSLVMSLNSYTQQVLYCPPDPAPENITEFVCNSPSLHEFPTGFPVRTKIISVEFTQVSSLGVEALQGLPNLQELHLSNNRLKTLPSGLFRNLPELHTLDLSTNLLEDLPPEIFTSTTSLTLLSISENRLAKLRLSWFETLKELRILSLDNNQLKEVPISCFDKLEKLTFLDLSSNHLHRLSPDMFSGLDNLERLSLENNPIRCIAPKSFHGRPKLSIISLKNCSLTNIITGVFQPLNHXVLLDLSDNELTMLDPPVAIPSANLSLDLTGNPWACNCRMDNLLTWVKEHKIDLYSKQEIVCAFPKSFKGEEATSLHRSQICPC.

The signal sequence occupies residues 1-23 (MKSSVPSLLFVSLVMSLNSYTQQ). Asn35 carries N-linked (GlcNAc...) asparagine glycosylation. LRR repeat units lie at residues 78-101 (LPNL…LFRN), 103-125 (PELH…IFTS), 127-149 (TSLT…WFET), 150-173 (LKEL…CFDK), 175-197 (EKLT…MFSG), 198-221 (LDNL…SFHG), 223-245 (PKLS…VFQP), and 247-269 (NHXV…VAIP). N-linked (GlcNAc...) asparagine glycosylation occurs at Asn232. Residue Asn272 is glycosylated (N-linked (GlcNAc...) asparagine). The region spanning 280-331 (NPWACNCRMDNLLTWVKEHKIDLYSKQEIVCAFPKSFKGEEATSLHRSQICP) is the LRRCT domain.

This sequence belongs to the beta-type phospholipase A2 inhibitor family. In terms of assembly, homotrimer.

The protein localises to the secreted. In terms of biological role, inhibits the enzymatic activity of the basic phospholipase A2 (PLA2). The sequence is that of Phospholipase A2 inhibitor beta from Elaphe climacophora (Japanese rat snake).